Reading from the N-terminus, the 303-residue chain is Sulfotransferase 6B1 (303 aa).

65-70 (KCGSNW) is a binding site for 3'-phosphoadenylyl sulfate. His-118 acts as the Proton acceptor in catalysis. Residues Arg-140, Ser-148, Tyr-203, 237-242 (STFQAM), and 259-261 (RKG) each bind 3'-phosphoadenylyl sulfate.

It belongs to the sulfotransferase 1 family. As to expression, specifically expressed in kidney and testis.

It is found in the cytoplasm. The protein localises to the cytosol. The catalysed reaction is thyroxine + 3'-phosphoadenylyl sulfate = thyroxine sulfate + adenosine 3',5'-bisphosphate + H(+). In terms of biological role, sulfotransferase that utilizes 3'-phospho-5'-adenylyl sulfate (PAPS) as sulfonate donor to catalyze the sulfate conjugation of thyroxine. Involved in the metabolism of thyroxine. This is Sulfotransferase 6B1 (SULT6B1) from Homo sapiens (Human).